We begin with the raw amino-acid sequence, 4691 residues long: Plectin (4691 aa).

The segment at 1-1478 (MVAGMLMPLD…SELTTLTSQY (1478 aa)) is globular 1. Arg-21 is subject to Phosphoserine. Val-26 carries the phosphotyrosine modification. Disordered stretches follow at residues 113–161 (RSPH…TPVV) and 167–186 (GTLARPGPEPAPATDERDRV). Residues 137-154 (DPAREERQVYRRKEREEG) show a composition bias toward basic and acidic residues. Positions 181–411 (DERDRVQKKT…YVSSLYDAMP (231 aa)) are actin-binding. 2 Calponin-homology (CH) domains span residues 185-293 (RVQK…LHFQ) and 306-411 (MTAK…DAMP). The stretch at 653–727 (LQSTQRRPEL…ERARNDESQL (75 aa)) is one Spectrin 1 repeat. Phosphoserine is present on Ser-728. Spectrin repeat units follow at residues 748-832 (KLLN…REDH) and 845-938 (LQTQ…AIVQ). Thr-823 is modified (phosphothreonine). The 58-residue stretch at 949–1006 (RGHVPLIAVCDYKQVEVTVHKGDQCQLVGPAQPSHWKVLSGSSSEAAVPSVCFLVPPP) folds into the SH3 domain. A required for interaction with intermediate filament proteins region spans residues 963 to 4572 (VEVTVHKGDQ…ARTAQKLRDV (3610 aa)). Phosphoserine is present on Ser-1055. One copy of the Spectrin 4 repeat lies at 1323-1423 (RERVTQLLER…QKFAKQYINA (101 aa)). Phosphoserine is present on Ser-1443. Coiled-coil stretches lie at residues 1477–1697 (QYIK…ERRL) and 1729–2764 (SFAE…TTQA). A central fibrous rod domain region spans residues 1479 to 2762 (IKFISETLRR…ALAHSEIATT (1284 aa)). The disordered stretch occupies residues 1626 to 1653 (RAEEAEAQKRQAQEEAERLRRQVQDESQ). Ser-1729 bears the Phosphoserine mark. Lys-1733 carries the N6-acetyllysine modification. 3 disordered regions span residues 1801–1835 (SLAQADAEKQKEEAEREARRRGKAEEQAVRQRELA), 2100–2141 (AEDT…SLAA), and 2223–2317 (RLRS…KHKK). Basic and acidic residues-rich tracts occupy residues 1806–1835 (DAEKQKEEAEREARRRGKAEEQAVRQRELA), 2100–2116 (AEDTMRSKEQAELEAAR), 2124–2136 (EEQRRREAEERVQ), and 2223–2266 (RLRS…KQSA). Positions 2267 to 2280 (EEQAQAQAQAQAAA) are enriched in low complexity. The segment covering 2281 to 2296 (EKLRKEAEQEAARRAQ) has biased composition (basic and acidic residues). Position 2639 is a phosphoserine (Ser-2639). Position 2644 is an N6-acetyllysine (Lys-2644). Residues 2675-2728 (LREEQQRQQQQMEQEKQELMASMEEARRRQREAEEGVRRKQEELQHLEQQRQQQ) form a disordered region. The span at 2687–2728 (EQEKQELMASMEEARRRQREAEEGVRRKQEELQHLEQQRQQQ) shows a compositional bias: basic and acidic residues. The segment at 2763 to 4691 (QAASTKALPN…SLGGPESAVA (1929 aa)) is globular 2. Residue Ser-2781 is modified to Phosphoserine. Tyr-2788 is modified (phosphotyrosine). 6 Plectin repeats span residues 2795–2832 (QKVPAQQLQEAGILSQEELQRLAQGHTTVAELTQREDV), 2833–2870 (YRYLKGRSSIAGLLLKPTNEKLSVYTALQRQLLSPGTA), 2871–2908 (LILLEAQAASGFLLDPVRNRRLTVNEAVKEGVVGPELH), 2909–2946 (HKLLSAERAVTGYKDPYTGEQISLFQAMKKDLIVRDHG), 2947–2984 (VRLLEAQIATGGIIDPVHSHRVPVDVAYKRGYFDEEMN), and 2988–3022 (SDPSDDTKGFFDPNTHENLTYLQLLERCVEDPETG). Phosphoserine is present on Ser-2809. At Thr-2893 the chain carries Phosphothreonine. Residue Tyr-3040 is modified to Phosphotyrosine. 2 positions are modified to N6-acetyllysine: Lys-3060 and Lys-3098. 6 Plectin repeats span residues 3123–3160 (ALVPAAELLDSGVISHELYQQLQRGERSVREVAEADSV), 3161–3198 (RQALRGTNVIAGVWLEEAGQKLSIYEALKKDLLQPEVA), 3199–3236 (VALLEAQAGTGHIIDPATSARLTVDEAVRAGLVGPELH), 3237–3274 (EKLLSAEKAVTGYRDPYSGQSVSLFQALKKGLIPREQG), 3275–3312 (LRLLDAQLSTGGIVDPSKSHRVPLDVAYARGYLDKETN), and 3315–3350 (LTSPRDDARVYHDPSTQEPVTYSQLQQRCRSDQLTG). The span at 3312 to 3326 (NRALTSPRDDARVYH) shows a compositional bias: basic and acidic residues. The tract at residues 3312–3338 (NRALTSPRDDARVYHDPSTQEPVTYSQ) is disordered. The span at 3328–3338 (PSTQEPVTYSQ) shows a compositional bias: polar residues. Position 3369 is a phosphotyrosine (Tyr-3369). Lys-3427 carries the post-translational modification N6-acetyllysine. Plectin repeat units lie at residues 3492 to 3529 (RTLLQGSGCLAGIYLEDSKEKVTIYEAMRRGLLRPSTA), 3530 to 3567 (TLLLEAQAATGFLVDPVRNQRLYVHEAVKAGVVGPELH), 3568 to 3605 (EKLLSAEKAVTGYKDPYSGNTISLFQAMKKGLVLRDHA), 3606 to 3643 (IRLLEAQVATGGIIDPVHSHRLPVDVAYQRGYFDEEMN), and 3647 to 3681 (ADPSDDTKGFFDPNTHENLTYLQLLERCVEDPETG). The residue at position 3792 (Thr-3792) is a Phosphothreonine. Residue Tyr-3797 is modified to Phosphotyrosine. 5 Plectin repeats span residues 3827-3864 (WRYLYGTGAVAGVYLPGSRQTLTIYQALKKGLLSAEVA), 3865-3902 (RLLLEAQAATGFLLDPVKGERLTVDEAVRKGLVGPELH), 3903-3940 (DRLLSAERAVTGYRDPYTEQTISLFQAMKKELIPAEEA), 3941-3978 (LRLLDAQLATGGIVDPRLGFHLPLEVAYQRGYLNKDTH), and 3982-4015 (SEPSEVRSYVDPSTDERLSYTQLLKRCRRDDPSG). The segment at 3954–4291 (VDPRLGFHLP…KRRVVIVDPE (338 aa)) is required for interaction with type2 keratins, DES and VIM. Residue Thr-4037 is modified to Phosphothreonine. Ser-4061 is subject to Phosphoserine. 6 Plectin repeats span residues 4070–4107 (QKFLEGTSCIAGVFVDATKERLSVYQAMKKGIIRPGTA), 4108–4145 (FELLEAQAATGYVIDPIKGLKLTVEEAVRMGIVGPEFK), 4146–4183 (DKLLSAERAVTGYKDPYSGKLISLFQAMKKGLILKDHG), 4184–4221 (IRLLEAQIATGGIIDPEESHRLPVEVAYKRGLFDEEMN), 4225–4259 (TDPSDDTKGFFDPNTEENLTYLQLMERCITDPQTG), and 4272–4312 (RKTS…HQTY). Residues 4257–4307 (QTGLCLLPLKEKKRERKTSSKSSVRKRRVVIVDPETGKEMSVYEAYRKGLI) form a binding to intermediate filaments region. The segment at 4387 to 4420 (FRSRSSSVGSSSSYPISSAGPRTQLASWSDPTEE) is disordered. Phosphoserine occurs at positions 4389, 4391, 4392, 4393, 4396, 4397, 4398, and 4399. The span at 4389–4404 (SRSSSVGSSSSYPISS) shows a compositional bias: low complexity. Phosphotyrosine is present on Tyr-4400. Phosphoserine is present on residues Ser-4403 and Ser-4413. Residues 4406 to 4416 (GPRTQLASWSD) are compositionally biased toward polar residues. 5 Plectin repeats span residues 4415–4452 (SDPTEETGPVAGILDTETLEKVSITEAMHRNLVDNITG), 4453–4490 (QRLLEAQACTGGIIDPSTGERFPVTEAVNKGLVDKIMV), 4491–4528 (DRINLAQKAFCGFEDPRTKTKMSAAQALKKGWLYYEAG), 4529–4566 (QRFLEVQYLTGGLIEPDTPGRVSLDEALQRGTVDARTA), and 4567–4604 (QKLRDVSAYSKYLTCPKTKLKISYKDALDRSMVEEGTG). The residue at position 4418 (Thr-4418) is a Phosphothreonine. The required for efficient interaction with KRT5 and KRT14 heterodimers stretch occupies residues 4503–4572 (FEDPRTKTKM…ARTAQKLRDV (70 aa)). At Thr-4546 the chain carries Phosphothreonine; by CDK1. Residues Ser-4614 and Ser-4620 each carry the phosphoserine modification. A compositionally biased stretch (low complexity) spans 4618 to 4678 (YYSPYSVSGS…SGYGRRYASG (61 aa)). The interval 4618-4691 (YYSPYSVSGS…SLGGPESAVA (74 aa)) is disordered. A Phosphotyrosine modification is found at Tyr-4622. Phosphoserine is present on residues Ser-4623, Ser-4625, and Ser-4629. At Thr-4630 the chain carries Phosphothreonine. Positions 4632–4647 (GSRTGSRTGSRAGSRR) are 4 X 4 AA tandem repeats of G-S-R-X. Ser-4633 carries the phosphoserine modification. An omega-N-methylarginine mark is found at Arg-4634 and Arg-4647. 2 positions are modified to phosphoserine: Ser-4649 and Ser-4682.

Belongs to the plakin or cytolinker family. Homodimer or homotetramer. Interacts (via actin-binding domain) with SYNE3. Interacts (via calponin-homology (CH) 1 domain) with VIM (via rod region). Interacts (via N-terminus) with DST isoform 2 (via N-terminus). Interacts with FER. Interacts with TOR1A. Interacts with ANK3. Identified in complexes that contain VIM, EZR, AHNAK, BFSP1, BFSP2, ANK2, PLEC, PRX and spectrin. In terms of assembly, interacts with KRT14, heterodimers consisting of KRT8 and KRT18, heterodimers consisting of KRT5 and KRT14, heterodimers consisting of KRT14 and KRT15, and heterodimers consisting of KRT1 and KRT10. Interacts with DES and VIM. In terms of processing, phosphorylated by CDK1; regulates dissociation from intermediate filaments during mitosis. Isoform PLEC-1A is phosphorylated on Ser-21. Isoform PLEC-1A is phosphorylated on Tyr-26. As to expression, detected in eye lens fiber cells (at protein level). Expressed at high levels in lung, brain, small intestine, muscle, heart and skin with lower levels found in kidney, liver, uterus, spleen and salivary gland.

Its subcellular location is the cytoplasm. The protein localises to the cytoskeleton. The protein resides in the cell junction. It is found in the hemidesmosome. It localises to the cell projection. Its subcellular location is the podosome. Functionally, interlinks intermediate filaments with microtubules and microfilaments and anchors intermediate filaments to desmosomes or hemidesmosomes. May be involved not only in the cross-linking and stabilization of cytoskeletal intermediate filaments network, but also in the regulation of their dynamics. This is Plectin (Plec) from Mus musculus (Mouse).